Reading from the N-terminus, the 202-residue chain is Putative 5'(3')-deoxyribonucleotidase (202 aa).

Aspartate 22 functions as the Nucleophile in the catalytic mechanism. Mg(2+) contacts are provided by aspartate 22, aspartate 24, and aspartate 156. The active-site Proton donor is aspartate 24.

It belongs to the 5'(3')-deoxyribonucleotidase family. Mg(2+) is required as a cofactor.

Dephosphorylates the 5' and 2'(3')-phosphates of deoxyribonucleotides. The chain is Putative 5'(3')-deoxyribonucleotidase from Chlorobaculum tepidum (strain ATCC 49652 / DSM 12025 / NBRC 103806 / TLS) (Chlorobium tepidum).